A 443-amino-acid chain; its full sequence is EGF-containing fibulin-like extracellular matrix protein 2 (443 aa).

The first 25 residues, 1-25 (MLPFASCLPGSLLLWALLLLLLGAA), serve as a signal peptide directing secretion. Residues 36–81 (YTECTDGYEWDADSQHCRDVNECLTIPEACKGEMKCINHYGGYLCL) enclose the EGF-like 1; atypical domain. Cystine bridges form between Cys58-Cys121, Cys65-Cys80, Cys71-Cys109, Cys127-Cys140, Cys134-Cys149, Cys151-Cys162, Cys168-Cys177, Cys173-Cys186, Cys188-Cys201, Cys207-Cys217, Cys213-Cys226, Cys228-Cys241, Cys247-Cys258, Cys254-Cys267, Cys269-Cys281, Cys287-Cys300, Cys294-Cys309, and Cys315-Cys327. The EGF-like 2; calcium-binding domain occupies 123–163 (DVDECAQALHDCRPSQDCHNLPGSYQCTCPDGYRKVGPECV). An EGF-like 3; calcium-binding domain is found at 164 to 202 (DIDECRYRYCQHRCVNLPGSFRCQCEPGFQLGPNNRSCV). Asn198 carries an N-linked (GlcNAc...) asparagine glycan. Residues 203-242 (DVNECDMGAPCEQRCFNSYGTFLCRCNQGYELHRDGFSCS) form the EGF-like 4; calcium-binding domain. The region spanning 243-282 (DIDECSYSSYLCQYRCVNEPGRFSCHCPQGYQLLATRLCQ) is the EGF-like 5; calcium-binding domain. The EGF-like 6; calcium-binding domain occupies 283 to 328 (DIDECETGAHQCSEAQTCVNFHGGYRCVDTNRCVEPYVQVSDNRCF). Asn394 carries N-linked (GlcNAc...) asparagine glycosylation.

This sequence belongs to the fibulin family. In terms of assembly, homodimer; disulfide-linked. Multimer; allows heparin binding. Monomer. Interacts with FBN1 (via N-terminal domain); this interaction inhibits EFEMP2 binding to LOX and ELN. Interacts with LOX (via propeptide); this interaction is strong and facilitates formation of ternary complexes with ELN during elastic fiber assembly; this interaction limits interaction of EFEMP2 with FBLN5. Interacts with PITX2. Interacts with ELN with moderate affinity; this interaction regulates ELN self-assembly maturation stage. Interacts with FBLN5 with moderate affinity. Interacts with LOXL1 (via propeptide), LTBP1 and TGFB1 stronger than with LOXL2 and LTBP3. Interacts with PCOLCE. Interacts with collagen type IV trimer (COL4A1-COL4A1-COL4A2), NID2 and moderately with COL15A1-derived endostatin. Interacts with EMILIN1; this interaction promotes the incorporation of EFEMP2 into the extracellular matrix. Interacts with LTBP4; the LTBP4 long form (LTBP4L) has a stronger binding affinity than the LTBP4 short form and the LTBP4 long form promotes fibrillar deposition of EFEMP2. N-glycosylated; contains mostly complex-type glycans. Not O-glycosylated. In terms of processing, cleaved by ELANE; produces a 50-55 kDa fragment. Cleaved by MMP2 and MMP9; produces several fragments.

It is found in the secreted. The protein localises to the extracellular space. The protein resides in the extracellular matrix. It localises to the basement membrane. Functionally, plays a crucial role in elastic fiber formation in tissue, and in the formation of ultrastructural connections between elastic laminae and smooth muscle cells in the aorta, therefore participates in terminal differentiation and maturation of smooth muscle cell (SMC) and in the mechanical properties and wall integrity maintenance of the aorta. In addition, is involved in the control of collagen fibril assembly in tissue throught proteolytic activation of LOX leading to cross- linking of collagen and elastin. Also promotes ELN coacervation and participates in the deposition of ELN coacervates on to microfibrils but also regulates ELN cross- linking through LOX interaction. Moreover adheres to the cells through heparin binding in a calcium-dependent manner and regulates vascularlar smooth muscle cells proliferation through angiotensin signaling. This chain is EGF-containing fibulin-like extracellular matrix protein 2, found in Cricetulus griseus (Chinese hamster).